A 506-amino-acid polypeptide reads, in one-letter code: Tetratricopeptide repeat protein 8 (506 aa).

A disordered region spans residues 83-112 (RPGTSFARPKTSAKGVNPILRPTTNAGRPL). 8 TPR repeats span residues 217-250 (YYWK…KKLI), 251-283 (ETFA…FPEN), 284-317 (VTML…ESNN), 319-351 (EAIA…GVSS), 353-385 (ELFL…MTDD), 388-421 (ADVW…DPDH), 423-455 (ESLV…NPYM), and 456-489 (FEGN…FPEH).

Part of BBSome complex, that contains at least bbs-1, bbs-2, bbs-4, bbs-5, osm-12, bbs-8/ttc-8 and bbs-9. As to expression, expressed in head and tail neurons. Expressed in ciliated male tail-neurons. Expressed in thermosensory and CO(2) sensory AFD neurons.

It is found in the cell projection. The protein resides in the cilium. Its subcellular location is the cytoplasm. The protein localises to the cytoskeleton. It localises to the cilium basal body. It is found in the cilium axoneme. Component of the BBSome complex. The BBSome complex is thought to function as a coat complex required for sorting of specific membrane proteins to the primary cilia. The BBSome complex is required for ciliogenesis but is dispensable for centriolar satellite function. Required for proper BBSome complex assembly and its ciliary localization. Required for cilia biogenesis and both the assembly and movement of intraflagellar transport proteins along the ciliary axoneme. Plays a role in guanylyl cyclase localization in the ring-like structures at the base of the finger compartment in AFD sensory neurons. This Caenorhabditis elegans protein is Tetratricopeptide repeat protein 8.